A 690-amino-acid polypeptide reads, in one-letter code: Protein O-mannosyl-transferase F38B6.6 (690 aa).

The segment at 1–24 (MKKHLHHKVSGSCDPGDRSPKEKG) is disordered. Topologically, residues 1 to 32 (MKKHLHHKVSGSCDPGDRSPKEKGRSQGIRNL) are cytoplasmic. Residues 15–24 (PGDRSPKEKG) are compositionally biased toward basic and acidic residues. The helical transmembrane segment at 33-53 (LILISLSIIPYLSCLGGDFVF) threads the bilayer. The Extracellular portion of the chain corresponds to 54-110 (DDAESIVNNPIVNGKDPLLQIFSRDFWGRSISSSNSHKSYRPVTTFTFWLNYKLHET). Residues 111–131 (STLGYHVVNIICHTVATLVFY) traverse the membrane as a helical segment. The Cytoplasmic segment spans residues 132 to 138 (KLGKQLE). A helical transmembrane segment spans residues 139–159 (HIFDFFNIAFSASILFAVHPV). Over 160–166 (HTEAVAN) the chain is Extracellular. Residue Asn-166 is glycosylated (N-linked (GlcNAc...) asparagine). Residues 167-187 (ITGRAELLMTIFSLAALILHV) traverse the membrane as a helical segment. Topologically, residues 188–234 (KNREINCKFVLLVILSTLSKEQGLMTIPIAICIDFLAHRSCRSNFVR) are cytoplasmic. The helical transmembrane segment at 235–255 (MICLLVAIGFLRMMVNGFEAA) threads the bilayer. The Extracellular segment spans residues 256–273 (KFTKLDNPTAFLNSKFYR). Residues 274–294 (MINYTYIWLYHAYLLVIPVNL) form a helical membrane-spanning segment. Over 295–307 (CFDYSMGCISSIT) the chain is Cytoplasmic. A helical membrane pass occupies residues 308-328 (TMWDLRALSPVLIFTIVIIGV). Residues 329 to 341 (KFQNECRAFTLSS) are Extracellular-facing. Residues 342–362 (LMGIISFLPASNIFFTVGFSI) traverse the membrane as a helical segment. The Cytoplasmic portion of the chain corresponds to 363–365 (AER). The chain crosses the membrane as a helical span at residues 366–386 (VLYLPSAGFCLLCAIIFKKLS). Topologically, residues 387 to 690 (VHFKNADVLS…EHNCYNSTLP (304 aa)) are extracellular. TPR repeat units lie at residues 398–431 (TLIL…CPTN), 432–465 (AKIH…DPSY), 466–499 (EQAL…RPSF), 500–533 (AVAW…RPNS), and 534–567 (AHCL…DPSH). 3 N-linked (GlcNAc...) asparagine glycosylation sites follow: Asn-559, Asn-600, and Asn-617. TPR repeat units lie at residues 602–635 (SRVH…NPTS) and 636–669 (VLFH…DSKN). N-linked (GlcNAc...) asparagine glycosylation occurs at Asn-686.

This sequence belongs to the TMTC family.

It is found in the membrane. The protein resides in the endoplasmic reticulum. The enzyme catalyses a di-trans,poly-cis-dolichyl beta-D-mannosyl phosphate + L-seryl-[protein] = 3-O-(alpha-D-mannosyl)-L-seryl-[protein] + a di-trans,poly-cis-dolichyl phosphate + H(+). It carries out the reaction a di-trans,poly-cis-dolichyl beta-D-mannosyl phosphate + L-threonyl-[protein] = 3-O-(alpha-D-mannosyl)-L-threonyl-[protein] + a di-trans,poly-cis-dolichyl phosphate + H(+). It functions in the pathway protein modification; protein glycosylation. Transfers mannosyl residues to the hydroxyl group of serine or threonine residues. This Caenorhabditis elegans protein is Protein O-mannosyl-transferase F38B6.6.